An 857-amino-acid polypeptide reads, in one-letter code: Protein sip-5 (857 aa).

Disordered regions lie at residues 1–81, 157–231, 384–416, 466–517, 545–747, and 763–857; these read MGNA…ARRL, GLPI…FKPT, SESS…APNV, FGRR…GNRR, KAEK…PMFN, and HAGK…QVTL. 2 stretches are compositionally biased toward basic and acidic residues: residues 7-16 and 36-48; these read KESRGDDSGR and ESSR…RHDL. The span at 49 to 61 shows a compositional bias: low complexity; the sequence is TGLLGRAAGGSSS. Over residues 62 to 81 the composition is skewed to basic and acidic residues; it reads HADERHERKETKQEREARRL. 2 stretches are compositionally biased toward polar residues: residues 179–191 and 199–208; these read ASPT…TNHL and SLSTASEHST. 3 stretches are compositionally biased toward low complexity: residues 209-230, 384-394, and 476-504; these read SNAG…PFKP, SESSVNSGSLS, and SASA…TANT. The span at 545–572 shows a compositional bias: basic and acidic residues; it reads KAEKEEQKEAKKREKEREKAEKKAEKAA. Low complexity-rich tracts occupy residues 586 to 604 and 621 to 645; these read SRSG…PGLS and ASVA…ALAP. Basic and acidic residues predominate over residues 648–657; the sequence is STKDKGKAVD. The segment covering 688-697 has biased composition (low complexity); that stretch reads SSASSASSSA. Polar residues predominate over residues 698–712; sequence VESNQGSYVPPSNLQ. Basic and acidic residues predominate over residues 783 to 799; sequence ETAKSGEGAGEHVEHVL. Polar residues-rich tracts occupy residues 800–838 and 845–857; these read DSQT…STAS and NETT…QVTL.

The protein belongs to the SIP5 family.

It localises to the cytoplasm. Functionally, may negatively regulate the snf-1 kinase. The chain is Protein sip-5 (sip-5) from Neurospora crassa (strain ATCC 24698 / 74-OR23-1A / CBS 708.71 / DSM 1257 / FGSC 987).